A 126-amino-acid polypeptide reads, in one-letter code: Copper resistance protein C (126 aa).

Positions 1–24 are cleaved as a signal peptide; sequence MLLNRTSFVTLFAAGMLVSALAQA. H25 lines the Cu(2+) pocket. Residues M64, M67, M70, H72, and M75 each coordinate Cu(+). H115 contributes to the Cu(2+) binding site.

This sequence belongs to the CopC family. Monomer.

It is found in the periplasm. With respect to regulation, the redox state of copper bound to CopC may act as a switch between the possible trafficking pathways of the metal ion. Copper-binding protein involved in copper resistance and homeostasis. Probably mediates copper resistance by sequestering the excess of copper in the periplasm. May act as a copper carrier in the oxidizing periplasmic space that exchanges either Cu(I) or Cu(II) with its putative partners CopA, CopB and CopD. The protein is Copper resistance protein C of Pseudomonas syringae pv. tomato.